A 121-amino-acid polypeptide reads, in one-letter code: MAEHNEFGKEGEEEAAAYLIDKGYSIRHRNWHCGKKELDIVAEYRNELIVIEVKTRKNTRFGNPEDAVTDKKIRRIIASTDAYLRKFSVDLPVRFDIITLVGEKTPFTIEHIEEAFYPPIW.

This sequence belongs to the UPF0102 family.

The chain is UPF0102 protein BVU_1879 from Phocaeicola vulgatus (strain ATCC 8482 / DSM 1447 / JCM 5826 / CCUG 4940 / NBRC 14291 / NCTC 11154) (Bacteroides vulgatus).